A 121-amino-acid polypeptide reads, in one-letter code: Small ribosomal subunit protein uS13 (121 aa).

Residues 93–121 (RGLPMRGQRTRTNARTRKGPRKAAQSLKK) are disordered.

The protein belongs to the universal ribosomal protein uS13 family. In terms of assembly, part of the 30S ribosomal subunit. Forms a loose heterodimer with protein S19. Forms two bridges to the 50S subunit in the 70S ribosome.

Functionally, located at the top of the head of the 30S subunit, it contacts several helices of the 16S rRNA. In the 70S ribosome it contacts the 23S rRNA (bridge B1a) and protein L5 of the 50S subunit (bridge B1b), connecting the 2 subunits; these bridges are implicated in subunit movement. Contacts the tRNAs in the A and P-sites. In Variovorax paradoxus (strain S110), this protein is Small ribosomal subunit protein uS13.